Here is a 271-residue protein sequence, read N- to C-terminus: Putative glucose-6-phosphate 1-epimerase (271 aa).

The substrate site is built by Arg71 and Arg93. His151 is a catalytic residue. Position 193 (Asp193) interacts with substrate. Glu249 is a catalytic residue.

It belongs to the glucose-6-phosphate 1-epimerase family.

The enzyme catalyses alpha-D-glucose 6-phosphate = beta-D-glucose 6-phosphate. The chain is Putative glucose-6-phosphate 1-epimerase from Haemophilus influenzae (strain ATCC 51907 / DSM 11121 / KW20 / Rd).